A 1374-amino-acid chain; its full sequence is Probable ATP-dependent RNA helicase spindle-E (1374 aa).

Residues 46 to 212 form the Helicase ATP-binding domain; that stretch reads LARIRENPVI…FKTPKKVGYL (167 aa). ATP is bound at residue 59–66; that stretch reads GPTGCGKT. Positions 158–161 match the DEAH box motif; it reads DEIH. Residues 265-447 enclose the Helicase C-terminal domain; it reads VCDRLIENMH…NVILKAKLLE (183 aa). The Tudor domain maps to 866-931; that stretch reads QFAVGQMVAA…RKLDGPLAYM (66 aa).

Belongs to the DEAD box helicase family. DEAH subfamily.

It localises to the cytoplasm. It catalyses the reaction ATP + H2O = ADP + phosphate + H(+). Probable ATP-binding RNA helicase which plays a central role during gametogenesis by repressing transposable elements and preventing their mobilization, which is essential for the germline integrity. Acts via the piRNA metabolic process, which mediates the repression of transposable elements during meiosis by forming complexes composed of piRNAs and Piwi proteins and govern the methylation and subsequent repression of transposons. This is Probable ATP-dependent RNA helicase spindle-E (spn-E) from Aedes aegypti (Yellowfever mosquito).